The chain runs to 525 residues: Ribonuclease Y (525 aa).

A helical membrane pass occupies residues 3-23; that stretch reads IFFISLVLIVLASVVFFVGGF. One can recognise a KH domain in the interval 215 to 300; it reads ALSVVHIQSD…KAYEDAKKEI (86 aa). The HD domain occupies 341 to 433; that stretch reads LLQHSREVAM…VDAANVISLS (93 aa).

Belongs to the RNase Y family.

It localises to the cell membrane. Functionally, endoribonuclease that initiates mRNA decay. In Chlorobium phaeobacteroides (strain DSM 266 / SMG 266 / 2430), this protein is Ribonuclease Y.